Reading from the N-terminus, the 265-residue chain is 5'-nucleotidase SurE (265 aa).

4 residues coordinate a divalent metal cation: Asp-12, Asp-13, Ser-43, and Asn-91.

The protein belongs to the SurE nucleotidase family. Requires a divalent metal cation as cofactor.

It is found in the cytoplasm. It carries out the reaction a ribonucleoside 5'-phosphate + H2O = a ribonucleoside + phosphate. In terms of biological role, nucleotidase that shows phosphatase activity on nucleoside 5'-monophosphates. This is 5'-nucleotidase SurE from Haloquadratum walsbyi (strain DSM 16790 / HBSQ001).